Consider the following 235-residue polypeptide: Putative N-acetylmannosamine-6-phosphate 2-epimerase (235 aa).

This sequence belongs to the NanE family.

It carries out the reaction an N-acyl-D-glucosamine 6-phosphate = an N-acyl-D-mannosamine 6-phosphate. Its pathway is amino-sugar metabolism; N-acetylneuraminate degradation; D-fructose 6-phosphate from N-acetylneuraminate: step 3/5. Its function is as follows. Converts N-acetylmannosamine-6-phosphate (ManNAc-6-P) to N-acetylglucosamine-6-phosphate (GlcNAc-6-P). In Enterobacter sp. (strain 638), this protein is Putative N-acetylmannosamine-6-phosphate 2-epimerase.